The primary structure comprises 258 residues: MLKTRIIPCLDVKDGRVVKGVQFLELRDAGDPVESAKAYDAAGADELCFLDITASHEDRGTLLDVVSRTAEACFMPLTVGGGVRTVSDVRTLLLAGADKVGINTAAVKNPDFVAEAAEKFGDQCIVVAIDAKRVSGPHEAARWEIFTHGGRNPTGLDAVEFARKVSERGAGELLVTSMDKDGTRSGYDLALTRAIADAVKVPVIASGGVGGLDDLVAGVRDGGASAVLAASIFHFGQHTVAEAKSHMAAAGLAMRLDP.

Catalysis depends on residues Asp-11 and Asp-130.

Belongs to the HisA/HisF family. In terms of assembly, heterodimer of HisH and HisF.

Its subcellular location is the cytoplasm. The catalysed reaction is 5-[(5-phospho-1-deoxy-D-ribulos-1-ylimino)methylamino]-1-(5-phospho-beta-D-ribosyl)imidazole-4-carboxamide + L-glutamine = D-erythro-1-(imidazol-4-yl)glycerol 3-phosphate + 5-amino-1-(5-phospho-beta-D-ribosyl)imidazole-4-carboxamide + L-glutamate + H(+). Its pathway is amino-acid biosynthesis; L-histidine biosynthesis; L-histidine from 5-phospho-alpha-D-ribose 1-diphosphate: step 5/9. Functionally, IGPS catalyzes the conversion of PRFAR and glutamine to IGP, AICAR and glutamate. The HisF subunit catalyzes the cyclization activity that produces IGP and AICAR from PRFAR using the ammonia provided by the HisH subunit. This Methylorubrum populi (strain ATCC BAA-705 / NCIMB 13946 / BJ001) (Methylobacterium populi) protein is Imidazole glycerol phosphate synthase subunit HisF.